Reading from the N-terminus, the 462-residue chain is ATP-dependent protease ATPase subunit HslU (462 aa).

ATP is bound by residues Ile21, 63-68 (GVGKTE), Asp275, Glu340, and Arg412.

Belongs to the ClpX chaperone family. HslU subfamily. A double ring-shaped homohexamer of HslV is capped on each side by a ring-shaped HslU homohexamer. The assembly of the HslU/HslV complex is dependent on binding of ATP.

Its subcellular location is the cytoplasm. Functionally, ATPase subunit of a proteasome-like degradation complex; this subunit has chaperone activity. The binding of ATP and its subsequent hydrolysis by HslU are essential for unfolding of protein substrates subsequently hydrolyzed by HslV. HslU recognizes the N-terminal part of its protein substrates and unfolds these before they are guided to HslV for hydrolysis. In Pseudothermotoga lettingae (strain ATCC BAA-301 / DSM 14385 / NBRC 107922 / TMO) (Thermotoga lettingae), this protein is ATP-dependent protease ATPase subunit HslU.